The primary structure comprises 519 residues: Histidine ammonia-lyase (519 aa).

A cross-link (5-imidazolinone (Ala-Gly)) is located at residues 146-148 (ASG). Ser147 is subject to 2,3-didehydroalanine (Ser).

Belongs to the PAL/histidase family. Post-translationally, contains an active site 4-methylidene-imidazol-5-one (MIO), which is formed autocatalytically by cyclization and dehydration of residues Ala-Ser-Gly.

It localises to the cytoplasm. It carries out the reaction L-histidine = trans-urocanate + NH4(+). It functions in the pathway amino-acid degradation; L-histidine degradation into L-glutamate; N-formimidoyl-L-glutamate from L-histidine: step 1/3. This Psychrobacter sp. (strain PRwf-1) protein is Histidine ammonia-lyase.